Reading from the N-terminus, the 279-residue chain is Dehydrogenase/reductase SDR family member 4 (279 aa).

37–61 (LVTASTDGIGFAIARRLAQDGAHVV) is an NADP(+) binding site. K93 is modified (N6-acetyllysine; alternate). K93 carries the post-translational modification N6-succinyllysine; alternate. N6-acetyllysine is present on K106. S170 contributes to the substrate binding site. Y183 functions as the Proton acceptor in the catalytic mechanism. K187 provides a ligand contact to NADP(+). S221 is modified (phosphoserine). The residue at position 235 (K235) is an N6-succinyllysine. The short motif at 277–279 (SHL) is the Peroxisomal targeting signal element.

This sequence belongs to the short-chain dehydrogenases/reductases (SDR) family. As to quaternary structure, homotetramer.

The protein resides in the peroxisome. It carries out the reaction a secondary alcohol + NADP(+) = a ketone + NADPH + H(+). It catalyses the reaction 3alpha-hydroxy-5beta-pregnan-20-one + NADP(+) = 5beta-pregnan-3,20-dione + NADPH + H(+). The enzyme catalyses 5beta-dihydrotestosterone + NADPH + H(+) = 5beta-androstane-3alpha,17beta-diol + NADP(+). The catalysed reaction is all-trans-retinol + NADP(+) = all-trans-retinal + NADPH + H(+). It carries out the reaction isatin + NADPH + H(+) = 3-hydroxyindolin-2-one + NADP(+). In terms of biological role, NADPH-dependent oxidoreductase which catalyzes the reduction of a variety of compounds bearing carbonyl groups including ketosteroids, alpha-dicarbonyl compounds, aldehydes, aromatic ketones and quinones. Reduces all-trans-retinal and 9-cis retinal. Reduces 3-ketosteroids and benzil into 3alpha-hydroxysteroids and S-benzoin, respectively, in contrast to the stereoselectivity of primates DHRS4s which produce 3beta-hydroxysteroids and R-benzoin. In the reverse reaction, catalyzes the NADP-dependent oxidation of 3alpha-hydroxysteroids and alcohol, but with much lower efficiency. Involved in the metabolism of 3alpha-hydroxysteroids, retinoid, isatin and xenobiotic carbonyl compounds. This chain is Dehydrogenase/reductase SDR family member 4 (DHRS4), found in Bos taurus (Bovine).